The sequence spans 653 residues: Serine/threonine-protein phosphatase with EF-hands 1 (653 aa).

The IQ domain maps to Ser16–Phe45. The catalytic stretch occupies residues Ile121 to Lys455. Mn(2+) contacts are provided by Asp172, His174, Asp201, and Asn233. His234 functions as the Proton donor in the catalytic mechanism. Residues His285 and His403 each contribute to the Mn(2+) site. 3 consecutive EF-hand domains span residues Ser483–Leu518, Arg566–His601, and Ile606–Tyr641. Ca(2+) contacts are provided by Asp579, Asp581, Ser583, Glu590, Asp619, Asn621, Asp623, Ser625, and Glu630.

It belongs to the PPP phosphatase family. The cofactor is Mn(2+). Requires Mg(2+) as cofactor. In terms of tissue distribution, detected in retina and retinal derived Y-79 retinoblastoma cells. Also found in fetal brain.

It carries out the reaction O-phospho-L-seryl-[protein] + H2O = L-seryl-[protein] + phosphate. The catalysed reaction is O-phospho-L-threonyl-[protein] + H2O = L-threonyl-[protein] + phosphate. With respect to regulation, activated by calcium. In terms of biological role, may have a role in the recovery or adaptation response of photoreceptors. May have a role in development. This Homo sapiens (Human) protein is Serine/threonine-protein phosphatase with EF-hands 1 (PPEF1).